We begin with the raw amino-acid sequence, 135 residues long: Small ribosomal subunit protein uS9 (135 aa).

Residues 96-135 (SADNRKPLKTEGHLSRDPRAKERRKYGLKKARKAPQFSKR) form a disordered region. A compositionally biased stretch (basic and acidic residues) spans 97 to 115 (ADNRKPLKTEGHLSRDPRA). The segment covering 116–135 (KERRKYGLKKARKAPQFSKR) has biased composition (basic residues).

Belongs to the universal ribosomal protein uS9 family.

This Prochlorococcus marinus (strain MIT 9313) protein is Small ribosomal subunit protein uS9.